The following is a 485-amino-acid chain: D-alanine--D-alanyl carrier protein ligase (485 aa).

Residue 144 to 145 (TS) participates in ATP binding. Asp-189 serves as a coordination point for D-alanine. Position 284–289 (284–289 (NTYGPT)) interacts with ATP. Val-293 provides a ligand contact to D-alanine. ATP-binding residues include Asp-365 and Lys-473. Lys-473 contributes to the D-alanine binding site.

Belongs to the ATP-dependent AMP-binding enzyme family. DltA subfamily.

The protein localises to the cytoplasm. It carries out the reaction holo-[D-alanyl-carrier protein] + D-alanine + ATP = D-alanyl-[D-alanyl-carrier protein] + AMP + diphosphate. It functions in the pathway cell wall biogenesis; lipoteichoic acid biosynthesis. Its function is as follows. Catalyzes the first step in the D-alanylation of lipoteichoic acid (LTA), the activation of D-alanine and its transfer onto the D-alanyl carrier protein (Dcp) DltC. In an ATP-dependent two-step reaction, forms a high energy D-alanyl-AMP intermediate, followed by transfer of the D-alanyl residue as a thiol ester to the phosphopantheinyl prosthetic group of the Dcp. D-alanylation of LTA plays an important role in modulating the properties of the cell wall in Gram-positive bacteria, influencing the net charge of the cell wall. The protein is D-alanine--D-alanyl carrier protein ligase of Staphylococcus epidermidis (strain ATCC 35984 / DSM 28319 / BCRC 17069 / CCUG 31568 / BM 3577 / RP62A).